Reading from the N-terminus, the 876-residue chain is Alanine--tRNA ligase (876 aa).

Zn(2+) contacts are provided by His-564, His-568, Cys-666, and His-670.

The protein belongs to the class-II aminoacyl-tRNA synthetase family. It depends on Zn(2+) as a cofactor.

Its subcellular location is the cytoplasm. It carries out the reaction tRNA(Ala) + L-alanine + ATP = L-alanyl-tRNA(Ala) + AMP + diphosphate. Functionally, catalyzes the attachment of alanine to tRNA(Ala) in a two-step reaction: alanine is first activated by ATP to form Ala-AMP and then transferred to the acceptor end of tRNA(Ala). Also edits incorrectly charged Ser-tRNA(Ala) and Gly-tRNA(Ala) via its editing domain. The protein is Alanine--tRNA ligase of Porphyromonas gingivalis (strain ATCC BAA-308 / W83).